Here is a 291-residue protein sequence, read N- to C-terminus: Transcription initiation factor IIE subunit beta (291 aa).

At Met-1 the chain carries N-acetylmethionine. Residues 1 to 13 (MDPSLLRERELFK) show a composition bias toward basic and acidic residues. The tract at residues 1 to 63 (MDPSLLRERE…NSDHSNGSFN (63 aa)) is disordered. Residues 50–62 (GSKQNSDHSNGSF) are compositionally biased toward polar residues. Ser-61 bears the Phosphoserine mark. The TFIIE beta DNA-binding region spans 66 to 146 (ALSGSSGYKF…YAFKPKYNVR (81 aa)). Position 74 is an N6-acetyllysine (Lys-74). The tract at residues 243-272 (SSMQESGPKKVAPIQRRKKPASQKKRRFKT) is disordered. The span at 257–271 (QRRKKPASQKKRRFK) shows a compositional bias: basic residues.

The protein belongs to the TFIIE beta subunit family. As to quaternary structure, tetramer of two alpha and two beta chains. Interacts with FACT subunit SUPT16H. Interacts with ATF7IP. Interacts with SND1. Part of TBP-based Pol II pre-initiation complex (PIC), in which Pol II core assembles with general transcription factors and other specific initiation factors including GTF2E1, GTF2E2, GTF2F1, GTF2F2, TCEA1, ERCC2, ERCC3, GTF2H2, GTF2H3, GTF2H4, GTF2H5, GTF2A1, GTF2A2, GTF2B and TBP; this large multi-subunit PIC complex mediates DNA unwinding and targets Pol II core to the transcription start site where the first phosphodiester bond forms.

The protein localises to the nucleus. In terms of biological role, recruits TFIIH to the initiation complex and stimulates the RNA polymerase II C-terminal domain kinase and DNA-dependent ATPase activities of TFIIH. Both TFIIH and TFIIE are required for promoter clearance by RNA polymerase. This chain is Transcription initiation factor IIE subunit beta (GTF2E2), found in Homo sapiens (Human).